Consider the following 2275-residue polypeptide: Serine-rich adhesin for platelets (2275 aa).

The signal sequence occupies residues 1–89 (MSKRQKEFHD…VNMLHDQQAF (89 aa)). A serine-rich repeat region 1, SRR1 region spans residues 90–230 (AASDAPLTSE…KTSTTSTSTA (141 aa)). Polar residues predominate over residues 100–111 (LNTQSETVGNQN). 2 disordered regions span residues 100-229 (LNTQ…STST) and 751-2247 (NSMS…GLLG). Residues 112–128 (STTIEASTSTADSTSVT) show a composition bias toward low complexity. Positions 129-140 (KNSSSVQTSNSD) are enriched in polar residues. The segment covering 150–229 (VTSTTNSTSN…NKTSTTSTST (80 aa)) has biased composition (low complexity). The tract at residues 231–751 (PVKLRTFSRL…TTFKYEVTRN (521 aa)) is non-repeat region (NRR). 2 stretches are compositionally biased toward low complexity: residues 752 to 1392 (SMSD…LSLS) and 1402 to 2218 (SNSA…ATSE). The interval 752 to 2236 (SMSDSVSTSG…AQSEKRLPDT (1485 aa)) is serine-rich repeat region 2, SRR2. Residues 2233–2237 (LPDTG) carry the LPXTG sorting signal motif. A Pentaglycyl murein peptidoglycan amidated threonine modification is found at Thr-2236. The propeptide at 2237 to 2275 (GDSIKQNGLLGGVMTLLVGLGLMKRKKKKDENDQDDSQA) is removed by sortase.

The protein belongs to the serine-rich repeat protein (SRRP) family. Proteolytically cleaved by a metalloprotease. Post-translationally, glycosylated. It is probable that most of the Ser residues in SSR1 and SSR2 are O-GlcNAcylated. Sequential glycosylation by sugar transferases are able to generate complex sugar polymorphisms.

It localises to the secreted. The protein localises to the cell wall. In terms of biological role, mediates binding to human platelets, possibly through a receptor-ligand interaction. Probably associated with virulence in endovascular infection. The sequence is that of Serine-rich adhesin for platelets (sraP) from Staphylococcus aureus (strain MSSA476).